Here is a 274-residue protein sequence, read N- to C-terminus: Lipoprotein E (274 aa).

The first 20 residues, 1–20 (MKTTLKMTALAALSAFVLAG), serve as a signal peptide directing secretion. Cys-21 carries the N-palmitoyl cysteine lipid modification. A lipid anchor (S-diacylglycerol cysteine) is attached at Cys-21.

The protein localises to the cell outer membrane. The chain is Lipoprotein E (hel) from Haemophilus influenzae (strain ATCC 51907 / DSM 11121 / KW20 / Rd).